The primary structure comprises 149 residues: Probable glycine-rich RNA-binding protein 1 (149 aa).

Residues 8–83 (YRCFVGGLAW…LDGRNITAQA (76 aa)) enclose the RRM domain. The interval 80–149 (TAQARGSGTR…GRSEGGSWRN (70 aa)) is disordered. Gly residues-rich tracts occupy residues 87-101 (GTRGGMVGGYGSGGY), 110-123 (YNRGGGGGYGGGYG), and 131-143 (YGDGGYGGQGRSE).

Belongs to the GR-RBP family.

In terms of biological role, possibly has a role in RNA transcription or processing during stress. In Arabidopsis thaliana (Mouse-ear cress), this protein is Probable glycine-rich RNA-binding protein 1 (RBG1).